The chain runs to 343 residues: 3-dehydroquinate synthase (343 aa).

Residues 61-66 (SGEKYK), 95-99 (GVISD), 119-120 (TT), Lys-132, Lys-141, and 159-162 (FLKT) contribute to the NAD(+) site. Residues Glu-174, His-231, and His-248 each coordinate Zn(2+).

This sequence belongs to the sugar phosphate cyclases superfamily. Dehydroquinate synthase family. The cofactor is Co(2+). Requires Zn(2+) as cofactor. NAD(+) serves as cofactor.

The protein localises to the cytoplasm. It catalyses the reaction 7-phospho-2-dehydro-3-deoxy-D-arabino-heptonate = 3-dehydroquinate + phosphate. Its pathway is metabolic intermediate biosynthesis; chorismate biosynthesis; chorismate from D-erythrose 4-phosphate and phosphoenolpyruvate: step 2/7. In terms of biological role, catalyzes the conversion of 3-deoxy-D-arabino-heptulosonate 7-phosphate (DAHP) to dehydroquinate (DHQ). The protein is 3-dehydroquinate synthase of Helicobacter pylori (strain G27).